Consider the following 551-residue polypeptide: MAASTSTRFLVLLKDFSAFRKISWTCAATNFHRQSRFLCHVAKEDGSLTLASLDLGNKPRKFGKGKAMKLEGSFVTEMGQGKVRAVKNDKMKVVKEKKPAEIVSPLFSAKSFEELGLPDSLLDSLEREGFSVPTDVQSAAVPAIIKGHDAVIQSYTGSGKTLAYLLPILSEIGPLAEKSRSSHSENDKRTEIQAMIVAPSRELGMQIVREVEKLLGPVHRRMVQQLVGGANRMRQEEALKKNKPAIVVGTPGRIAEISKGGKLHTHGCRFLVLDEVDELLSFNFREDIHRILEHVGKRSGAGPKGEVDERANRQTILVSATVPFSVIRAAKSWSHEPVLVQANKVTPLDTVQPSAPVMSLTPTTSEADGQIQTTIQSLPPALKHYYCISKHQHKVDTLRRCVHALDAQSVIAFMNHSRQLKDVVYKLEARGMNSAEMHGDLGKLGRSTVLKKFKNGEIKVLVTNELSARGLDVAECDLVVNLELPTDAVHYAHRAGRTGRLGRKGTVVTVCEESQVFIVKKMEKQLGLPFLYCEFVDGELVVTEEDKAIIR.

Residues 1-29 (MAASTSTRFLVLLKDFSAFRKISWTCAAT) constitute a mitochondrion transit peptide. Positions 110–138 (KSFEELGLPDSLLDSLEREGFSVPTDVQS) match the Q motif motif. The Helicase ATP-binding domain occupies 141–340 (VPAIIKGHDA…KSWSHEPVLV (200 aa)). 154-161 (SYTGSGKT) contacts ATP. Residues 274–277 (DEVD) carry the DEAD box motif. The 152-residue stretch at 397–548 (TLRRCVHALD…ELVVTEEDKA (152 aa)) folds into the Helicase C-terminal domain.

This sequence belongs to the DEAD box helicase family. In terms of tissue distribution, mostly expressed in leaves and flowers, and, to a lower extent, in roots, seedlings and siliques, especially in meristematic regions.

The protein localises to the mitochondrion. It carries out the reaction ATP + H2O = ADP + phosphate + H(+). Functionally, essential protein required during embryogenesis. Required for mitochondrial metabolism. Necessary for normal plasmodesmata (PD) development and aperture regulation. This is DEAD-box ATP-dependent RNA helicase 47, mitochondrial (RH47) from Arabidopsis thaliana (Mouse-ear cress).